Here is a 225-residue protein sequence, read N- to C-terminus: Mitochondrial inner membrane protease ATP23 (225 aa).

H124 lines the a divalent metal cation pocket. The active site involves E125. Residue H128 participates in a divalent metal cation binding.

The protein belongs to the peptidase M76 family.

Its subcellular location is the mitochondrion inner membrane. In terms of biological role, has a dual role in the assembly of mitochondrial ATPase. Acts as a protease that removes N-terminal residues of mitochondrial ATPase CF(0) subunit 6 at the intermembrane space side. Also involved in the correct assembly of the membrane-embedded ATPase CF(0) particle, probably mediating association of subunit 6 with the subunit 9 ring. This Candida glabrata (strain ATCC 2001 / BCRC 20586 / JCM 3761 / NBRC 0622 / NRRL Y-65 / CBS 138) (Yeast) protein is Mitochondrial inner membrane protease ATP23 (ATP23).